Reading from the N-terminus, the 447-residue chain is Signal recognition particle 54 kDa protein (447 aa).

Residues 103 to 110 (GVQGSGKT), 185 to 189 (DTAGR), and 245 to 248 (TKMD) contribute to the GTP site.

This sequence belongs to the GTP-binding SRP family. SRP54 subfamily. Part of the signal recognition particle protein translocation system, which is composed of SRP and FtsY. Archaeal SRP consists of a 7S RNA molecule of 300 nucleotides and two protein subunits: SRP54 and SRP19.

It is found in the cytoplasm. It catalyses the reaction GTP + H2O = GDP + phosphate + H(+). In terms of biological role, involved in targeting and insertion of nascent membrane proteins into the cytoplasmic membrane. Binds to the hydrophobic signal sequence of the ribosome-nascent chain (RNC) as it emerges from the ribosomes. The SRP-RNC complex is then targeted to the cytoplasmic membrane where it interacts with the SRP receptor FtsY. In Saccharolobus islandicus (strain Y.G.57.14 / Yellowstone #1) (Sulfolobus islandicus), this protein is Signal recognition particle 54 kDa protein.